The primary structure comprises 808 residues: Sucrose synthase 1 (808 aa).

Residues 277-754 are GT-B glycosyltransferase; that stretch reads MVFNVVILSP…GLQRIEEKYT (478 aa).

Belongs to the glycosyltransferase 1 family. Plant sucrose synthase subfamily. Homotetramer. As to expression, expressed in the phloem of leaves and in roots. Detected in the whole plant but more precisely confined to the vasculature in cotyledons, mature leaves and siliques.

The enzyme catalyses an NDP-alpha-D-glucose + D-fructose = a ribonucleoside 5'-diphosphate + sucrose + H(+). In terms of biological role, sucrose-cleaving enzyme that provides UDP-glucose and fructose for various metabolic pathways. The sequence is that of Sucrose synthase 1 (SUS1) from Arabidopsis thaliana (Mouse-ear cress).